The sequence spans 210 residues: Outer-membrane lipoprotein carrier protein (210 aa).

The signal sequence occupies residues 1-23; that stretch reads MLMFSRFRYIFFAVALLSGPVCA.

This sequence belongs to the LolA family. As to quaternary structure, monomer.

Its subcellular location is the periplasm. In terms of biological role, participates in the translocation of lipoproteins from the inner membrane to the outer membrane. Only forms a complex with a lipoprotein if the residue after the N-terminal Cys is not an aspartate (The Asp acts as a targeting signal to indicate that the lipoprotein should stay in the inner membrane). The polypeptide is Outer-membrane lipoprotein carrier protein (Xylella fastidiosa (strain Temecula1 / ATCC 700964)).